The sequence spans 331 residues: Pantothenate kinase (331 aa).

109–116 lines the ATP pocket; sequence GSVAVGKS.

Belongs to the prokaryotic pantothenate kinase family.

It localises to the cytoplasm. It catalyses the reaction (R)-pantothenate + ATP = (R)-4'-phosphopantothenate + ADP + H(+). Its pathway is cofactor biosynthesis; coenzyme A biosynthesis; CoA from (R)-pantothenate: step 1/5. The chain is Pantothenate kinase from Rhizobium johnstonii (strain DSM 114642 / LMG 32736 / 3841) (Rhizobium leguminosarum bv. viciae).